Consider the following 173-residue polypeptide: MARMNRPAPVEVTYKNMRFLITHNPTNATLNKFIEELKKYGVTTIVRVCEATYDTTLVEKEGIHVLDWPFDDGAPPSNQIVDDWLSLVKIKFREEPGCCIAVHCVAGLGRAPVLVALALIEGGMKYEDAVQFIRQKRRGAFNSKQLLYLEKYRPKMRLRFKDSNGHRNNCCIQ.

In terms of domain architecture, Tyrosine-protein phosphatase spans 8–161 (APVEVTYKNM…YRPKMRLRFK (154 aa)). Cysteine 49 and cysteine 104 are joined by a disulfide. The active-site Proton donor is the aspartate 72. Residues 97–132 (GCCIAVHCVAGLGRAPVLVALALIEGGMKYEDAVQF) are interaction with ATF5. Catalysis depends on cysteine 104, which acts as the Phosphocysteine intermediate. 105 to 110 (VAGLGR) lines the phosphate pocket. Arginine 110 lines the substrate pocket. Cysteine methyl ester is present on cysteine 170. Cysteine 170 carries S-farnesyl cysteine lipidation. A propeptide spans 171-173 (CIQ) (removed in mature form).

Belongs to the protein-tyrosine phosphatase family. Homotrimer. Interacts with ATF5. Interacts with tubulin. Farnesylated. Farnesylation is required for membrane targeting. Unfarnesylated forms are shifted into the nucleus. As to expression, expressed in bone marrow, lymph nodes, T lymphocytes, spleen, thymus and tonsil. Overexpressed in tumor cell lines.

It is found in the cell membrane. The protein resides in the early endosome. The protein localises to the endoplasmic reticulum. Its subcellular location is the cytoplasm. It localises to the cytoskeleton. It is found in the spindle. The protein resides in the nucleus. The catalysed reaction is O-phospho-L-tyrosyl-[protein] + H2O = L-tyrosyl-[protein] + phosphate. Inhibited by sodium orthovanadate and pentamidine. In terms of biological role, protein tyrosine phosphatase which stimulates progression from G1 into S phase during mitosis. May play a role in the development and maintenance of differentiating epithelial tissues. Enhances cell proliferation, cell motility and invasive activity, and promotes cancer metastasis. The protein is Protein tyrosine phosphatase type IVA 1 (PTP4A1) of Homo sapiens (Human).